The chain runs to 114 residues: Protein D2 (114 aa).

It belongs to the phosphatidylethanolamine-binding protein family.

In Onchocerca volvulus, this protein is Protein D2 (D2).